The sequence spans 305 residues: tRNA uridine(34) hydroxylase (305 aa).

The Rhodanese domain maps to 124–219 (QDEETLVVDT…YLETIPKEES (96 aa)). Residue cysteine 179 is the Cysteine persulfide intermediate of the active site.

This sequence belongs to the TrhO family.

It catalyses the reaction uridine(34) in tRNA + AH2 + O2 = 5-hydroxyuridine(34) in tRNA + A + H2O. Its function is as follows. Catalyzes oxygen-dependent 5-hydroxyuridine (ho5U) modification at position 34 in tRNAs. This chain is tRNA uridine(34) hydroxylase, found in Bartonella bacilliformis (strain ATCC 35685 / KC583 / Herrer 020/F12,63).